We begin with the raw amino-acid sequence, 149 residues long: 3-hydroxyacyl-[acyl-carrier-protein] dehydratase FabZ (149 aa).

The active site involves histidine 53.

It belongs to the thioester dehydratase family. FabZ subfamily.

It localises to the cytoplasm. The enzyme catalyses a (3R)-hydroxyacyl-[ACP] = a (2E)-enoyl-[ACP] + H2O. Involved in unsaturated fatty acids biosynthesis. Catalyzes the dehydration of short chain beta-hydroxyacyl-ACPs and long chain saturated and unsaturated beta-hydroxyacyl-ACPs. This is 3-hydroxyacyl-[acyl-carrier-protein] dehydratase FabZ from Neisseria gonorrhoeae (strain ATCC 700825 / FA 1090).